We begin with the raw amino-acid sequence, 216 residues long: Pyrrolidone-carboxylate peptidase (216 aa).

Residues glutamate 80, cysteine 143, and histidine 168 contribute to the active site.

It belongs to the peptidase C15 family. Homotetramer.

It localises to the cytoplasm. It catalyses the reaction Release of an N-terminal pyroglutamyl group from a polypeptide, the second amino acid generally not being Pro.. Functionally, removes 5-oxoproline from various penultimate amino acid residues except L-proline. This Cupriavidus taiwanensis (strain DSM 17343 / BCRC 17206 / CCUG 44338 / CIP 107171 / LMG 19424 / R1) (Ralstonia taiwanensis (strain LMG 19424)) protein is Pyrrolidone-carboxylate peptidase.